A 112-amino-acid polypeptide reads, in one-letter code: UPF0342 protein SGO_1370 (112 aa).

This sequence belongs to the UPF0342 family.

The sequence is that of UPF0342 protein SGO_1370 from Streptococcus gordonii (strain Challis / ATCC 35105 / BCRC 15272 / CH1 / DL1 / V288).